The following is a 248-amino-acid chain: Adenylate kinase (248 aa).

Residue 37–42 (GAGKGT) coordinates ATP. Residues 57-86 (SPGNLLREEMNRNSPITAQIKDYVSKGQLV) are NMP. AMP is bound by residues arginine 63, 84-86 (QLV), 111-114 (GFPR), and glutamine 118. The interval 149 to 181 (GRRFDPITGNTYHIIYDPPPPDIADRVVVRTDD) is LID. ATP is bound at residue arginine 150. Residues arginine 178 and arginine 189 each contribute to the AMP site.

The protein belongs to the adenylate kinase family. Monomer.

The protein resides in the cytoplasm. The catalysed reaction is AMP + ATP = 2 ADP. In terms of biological role, catalyzes the reversible transfer of the terminal phosphate group between ATP and AMP. Plays an important role in cellular energy homeostasis and in adenine nucleotide metabolism. This is Adenylate kinase from Giardia intestinalis (Giardia lamblia).